The chain runs to 127 residues: DNA-directed RNA polymerases I, II, and III subunit RPABC2 (127 aa).

The span at 1–32 (MSDNEDNFDGDDFDDVEEDEGLDDLENAEEEG) shows a compositional bias: acidic residues. The disordered stretch occupies residues 1–52 (MSDNEDNFDGDDFDDVEEDEGLDDLENAEEEGQVNVEILPSGERPQANQKRI). At Ser-2 the chain carries N-acetylserine. A Phosphoserine; by CK2 modification is found at Ser-2.

This sequence belongs to the archaeal Rpo6/eukaryotic RPB6 RNA polymerase subunit family. In terms of assembly, component of the RNA polymerase I (Pol I), RNA polymerase II (Pol II) and RNA polymerase III (Pol III) complexes consisting of at least 13, 12 and 17 subunits, respectively. Pol I complex consists of a ten-subunit catalytic core composed of POLR1A/RPA1, POLR1B/RPA2, POLR1C/RPAC1, POLR1D/RPAC2, POLR1H/RPA12, POLR2E/RPABC1, POLR2F/RPABC2, POLR2H/RPABC3, POLR2K/RPABC4 and POLR2L/RPABC5; a mobile stalk subunit POLR1F/RPA43 protruding from the core and additional subunits homologous to general transcription factors POLR1E/RPA49 and POLR1G/RPA34. Part of Pol I pre-initiation complex (PIC), in which Pol I core assembles with RRN3 and promoter-bound UTBF and SL1/TIF-IB complex. Pol II complex contains a ten-subunit catalytic core composed of POLR2A/RPB1, POLR2B/RPB2, POLR2C/RPB3, POLR2I/RPB9, POLR2J/RPB11, POLR2E/RPABC1, POLR2F/RPABC2, POLR2H/RPABC3, POLR2K/RPABC4 and POLR2L/RPABC5 and a mobile stalk composed of two subunits POLR2D/RPB4 and POLR2G/RPB7. Part of Pol II(G) complex, in which Pol II core associates with an additional subunit POLR2M; unlike conventional Pol II, Pol II(G) functions as a transcriptional repressor. Part of TBP-based Pol II pre-initiation complex (PIC), in which Pol II core assembles with general transcription factors and other specific initiation factors including GTF2E1, GTF2E2, GTF2F1, GTF2F2, TCEA1, ERCC2, ERCC3, GTF2H2, GTF2H3, GTF2H4, GTF2H5, GTF2A1, GTF2A2, GTF2B and TBP; this large multi-subunit PIC complex mediates DNA unwinding and targets Pol II core to the transcription start site where the first phosphodiester bond forms. Pol III complex consists of a ten-subunit catalytic core composed of POLR3A/RPC1, POLR3B/RPC2, POLR1C/RPAC1, POLR1D/RPAC2, POLR3K/RPC10, POLR2E/RPABC1, POLR2F/RPABC2, POLR2H/RPABC3, POLR2K/RPABC4 and POLR2L/RPABC5; a mobile stalk composed of two subunits POLR3H/RPC8 and CRCP/RPC9, protruding from the core and functioning primarily in transcription initiation; and additional subunits homologous to general transcription factors of the RNA polymerase II machinery, POLR3C/RPC3-POLR3F/RPC6-POLR3G/RPC7 heterotrimer required for transcription initiation and POLR3D/RPC4-POLR3E/RPC5 heterodimer involved in both transcription initiation and termination.

It is found in the nucleus. It localises to the nucleolus. Its function is as follows. DNA-dependent RNA polymerase catalyzes the transcription of DNA into RNA using the four ribonucleoside triphosphates as substrates. Common component of RNA polymerases I, II, and III which synthesize ribosomal RNA precursors, mRNA precursors and many functional non-coding RNAs, and small RNAs, such as 5S rRNA and tRNAs, respectively. Pol II is the central component of the basal RNA polymerase II transcription machinery. Pols are composed of mobile elements that move relative to each other. In Pol II, POLR2F/RPABC2 is part of the clamp element and together with parts of POLR2A/RPB1 and POLR2B/RPB2 forms a pocket to which the POLR2D/RPB4-POLR2G/RPB7 subcomplex binds. This chain is DNA-directed RNA polymerases I, II, and III subunit RPABC2 (POLR2F), found in Bos taurus (Bovine).